We begin with the raw amino-acid sequence, 362 residues long: MRSLNTLLLSLFVAMSSGAPLLKIREEKNSSLPSIKIFGTGGTIASKGSTSATTAGYSVGLTVNDLIEAVPSLAEKANLDYLQVSNVGSNSLNYTHLIPLYHGISEALASDDYAGAVVTHGTDTMEETAFFLDLTINSEKPVCIAGAMRPATATSADGPMNLYQAVSIAASEKSLGRGTMITLNDRIASGFWTTKMNANSLDTFRADEQGYLGYFSNDDVEFYYPPVKPNGWQFFDISNLTDPSEIPEVIILYSYQGLNPELIVKAVKDLGAKGIVLAGSGAGSWTATGSIVNEQLYEEYGIPIVHSRRTADGTVPPDDAPEYAIGSGYLNPQKSRILLQLCLYSGYGMDQIRSVFSGVYGG.

An N-terminal signal peptide occupies residues 1–25 (MRSLNTLLLSLFVAMSSGAPLLKIR). Asn29 carries an N-linked (GlcNAc...) asparagine glycan. In terms of domain architecture, Asparaginase/glutaminase spans 33 to 359 (PSIKIFGTGG…DQIRSVFSGV (327 aa)). Thr43 functions as the O-isoaspartyl threonine intermediate in the catalytic mechanism. Ser89 lines the substrate pocket. Residue Asn93 is glycosylated (N-linked (GlcNAc...) asparagine). Substrate is bound at residue 122-123 (TD). An N-linked (GlcNAc...) asparagine glycan is attached at Asn239.

This sequence belongs to the asparaginase 1 family.

Its subcellular location is the secreted. It localises to the periplasm. It catalyses the reaction L-asparagine + H2O = L-aspartate + NH4(+). This is L-asparaginase 2-1 (ASP3-1) from Saccharomyces cerevisiae (strain ATCC 204508 / S288c) (Baker's yeast).